The sequence spans 133 residues: Large ribosomal subunit protein uL16c (133 aa).

The protein belongs to the universal ribosomal protein uL16 family. Part of the 50S ribosomal subunit.

Its subcellular location is the plastid. It is found in the chloroplast. This chain is Large ribosomal subunit protein uL16c, found in Liriodendron tulipifera (Tuliptree).